A 745-amino-acid polypeptide reads, in one-letter code: Probable GMP synthase [glutamine-hydrolyzing] (745 aa).

The interval 1-37 (MKRSSSMLDINEDSQHSTNKAPPPKKAPEDRFDSANM) is disordered. The Glutamine amidotransferase type-1 domain occupies 60 to 252 (RIAILDFGAQ…LFKVVGCCGN (193 aa)). Catalysis depends on Cys-138, which acts as the For GATase activity. Catalysis depends on residues His-226 and Glu-228. The GMPS ATP-PPase domain maps to 253–461 (FTIQNREQSC…LGLPESIVQR (209 aa)). ATP is bound at residue 280–286 (SGGVDSA). Arg-363, Asp-563, Gln-662, Lys-737, and Glu-743 together coordinate substrate.

As to quaternary structure, homodimer.

The enzyme catalyses XMP + L-glutamine + ATP + H2O = GMP + L-glutamate + AMP + diphosphate + 2 H(+). It functions in the pathway purine metabolism; GMP biosynthesis; GMP from XMP (L-Gln route): step 1/1. The protein is Probable GMP synthase [glutamine-hydrolyzing] (gmps-1) of Caenorhabditis elegans.